The primary structure comprises 535 residues: T-box transcription factor TBX21 (535 aa).

Residues 1-62 (MGIVEPGCGD…SLGSPYPGGA (62 aa)) form a disordered region. S53 bears the Phosphoserine mark. Y77 carries the phosphotyrosine modification. Positions 83–109 (AAGFPGAGESFPPPADAEGYQPGEGYA) are disordered. The residue at position 118 (Y118) is a Phosphotyrosine. Residues 141–326 (LNNHLLWSKF…NNPFAKGFRE (186 aa)) constitute a DNA-binding region (T-box). Y220 is modified (phosphotyrosine; by ABL1). S225 bears the Phosphoserine mark. Y266 is modified (phosphotyrosine; by ABL1). Residue T303 is modified to Phosphothreonine. Y305 bears the Phosphotyrosine; by ABL1 mark. A Glycyl lysine isopeptide (Lys-Gly) (interchain with G-Cter in ubiquitin) cross-link involves residue K314. Residues 449–535 (RPMRTLPMEP…EGQFYNYFPN (87 aa)) form a disordered region. Residues 503 to 520 (SPYPSSGDSSSPAGAPSP) show a composition bias toward low complexity. A Phosphoserine modification is found at S513. A Phosphotyrosine; by ITK modification is found at Y530.

As to quaternary structure, interacts with RUNX1, RUNX3, ITK, ABL1, RELA, CDK9 and KDM6B. The phosphorylated form (at Thr-303) interacts with NFATC2. Interacts with SMARCA4 in a KDM6B-dependent manner. Interacts with CCTN1. Interacts with USP10. The phosphorylated form (at Tyr-530) interacts with GATA3. Phosphorylations at Ser-53, Tyr-77, Ser-225 and Ser-513 are regulated by mTORC1. Phosphorylation at Tyr-530 is essential for its interaction GATA3. Phosphorylation at Tyr-220, Tyr-266 and Tyr-305 enhances its transcriptional activator activity. Phosphorylation at Thr-303 is required for its interaction with NFATC2. In terms of processing, ubiquitinated at Lys-314, leading to its degradation by the proteasome. Ubiquitination is essential for controlling protein stability, binding to the T-box-binding element of the IFN-gamma promoter, and for interaction with NFATC2 through induction of phosphorylation at Thr-303. Deubiquitinated by USP10 leading to its stabilization. T-cell specific.

The protein resides in the nucleus. Its function is as follows. Lineage-defining transcription factor which initiates Th1 lineage development from naive Th precursor cells both by activating Th1 genetic programs and by repressing the opposing Th2 and Th17 genetic programs. Activates transcription of a set of genes important for Th1 cell function, including those encoding IFN-gamma and the chemokine receptor CXCR3. Induces permissive chromatin accessibilty and CpG methylation in IFNG. Activates IFNG and CXCR3 genes in part by recruiting chromatin remodeling complexes including KDM6B, a SMARCA4-containing SWI/SNF-complex, and an H3K4me2-methyltransferase complex to their promoters and all of these complexes serve to establish a more permissive chromatin state conducive with transcriptional activation. Can activate Th1 genes also via recruitment of Mediator complex and P-TEFb (composed of CDK9 and CCNT1/cyclin-T1) in the form of the super elongation complex (SEC) to super-enhancers and associated genes in activated Th1 cells. Inhibits the Th17 cell lineage commitment by blocking RUNX1-mediated transactivation of Th17 cell-specific transcriptinal regulator RORC. Inhibits the Th2 cell lineage commitment by suppressing the production of Th2 cytokines, such as IL-4, IL-5, and IL- 13, via repression of transcriptional regulators GATA3 and NFATC2. Protects Th1 cells from amplifying aberrant type-I IFN response in an IFN-gamma abundant microenvironment by acting as a repressor of type-I IFN transcription factors and type-I IFN-stimulated genes. Acts as a regulator of antiviral B-cell responses; controls chronic viral infection by promoting the antiviral antibody IgG2a isotype switching and via regulation of a broad antiviral gene expression program. Required for the correct development of natural killer (NK) and mucosal-associated invariant T (MAIT) cells. This is T-box transcription factor TBX21 (TBX21) from Homo sapiens (Human).